The primary structure comprises 150 residues: D-aminoacyl-tRNA deacylase (150 aa).

Residues 140–141 (GP) carry the Gly-cisPro motif, important for rejection of L-amino acids motif.

Belongs to the DTD family. In terms of assembly, homodimer.

Its subcellular location is the cytoplasm. The catalysed reaction is glycyl-tRNA(Ala) + H2O = tRNA(Ala) + glycine + H(+). The enzyme catalyses a D-aminoacyl-tRNA + H2O = a tRNA + a D-alpha-amino acid + H(+). An aminoacyl-tRNA editing enzyme that deacylates mischarged D-aminoacyl-tRNAs. Also deacylates mischarged glycyl-tRNA(Ala), protecting cells against glycine mischarging by AlaRS. Acts via tRNA-based rather than protein-based catalysis; rejects L-amino acids rather than detecting D-amino acids in the active site. By recycling D-aminoacyl-tRNA to D-amino acids and free tRNA molecules, this enzyme counteracts the toxicity associated with the formation of D-aminoacyl-tRNA entities in vivo and helps enforce protein L-homochirality. The sequence is that of D-aminoacyl-tRNA deacylase (DTD1) from Eremothecium gossypii (strain ATCC 10895 / CBS 109.51 / FGSC 9923 / NRRL Y-1056) (Yeast).